A 364-amino-acid polypeptide reads, in one-letter code: Peptidyl-prolyl cis-trans isomerase D (364 aa).

Residues 7-170 (YFDITIGNKP…EDAVIAKCGE (164 aa)) form the PPIase cyclophilin-type domain. 3 TPR repeats span residues 208 to 241 (ATHL…LNEK), 261 to 294 (IPCY…DSKY), and 301 to 334 (TKAY…DPED).

It belongs to the cyclophilin-type PPIase family. PPIase D subfamily.

Its subcellular location is the cytoplasm. It catalyses the reaction [protein]-peptidylproline (omega=180) = [protein]-peptidylproline (omega=0). Its function is as follows. PPIases accelerate the folding of proteins. It catalyzes the cis-trans isomerization of proline imidic peptide bonds in oligopeptides. This is Peptidyl-prolyl cis-trans isomerase D (cyp12) from Rhizopus delemar (strain RA 99-880 / ATCC MYA-4621 / FGSC 9543 / NRRL 43880) (Mucormycosis agent).